Reading from the N-terminus, the 78-residue chain is Probable Fe(2+)-trafficking protein (78 aa).

The protein belongs to the Fe(2+)-trafficking protein family. As to quaternary structure, monomer.

In terms of biological role, could be a mediator in iron transactions between iron acquisition and iron-requiring processes, such as synthesis and/or repair of Fe-S clusters in biosynthetic enzymes. This chain is Probable Fe(2+)-trafficking protein, found in Buchnera aphidicola subsp. Schizaphis graminum (strain Sg).